The chain runs to 391 residues: Na(+)/H(+) antiporter NhaA 1 (391 aa).

The next 11 helical transmembrane spans lie at Ala-25 to Leu-45, Val-56 to Leu-76, Ala-98 to Ile-118, Gly-128 to Gly-148, Val-157 to Phe-177, Ala-180 to Met-200, Leu-208 to His-228, Val-264 to Ile-284, Val-297 to Ile-317, Gly-335 to Phe-355, and Glu-364 to Leu-384.

The protein belongs to the NhaA Na(+)/H(+) (TC 2.A.33) antiporter family.

It localises to the cell inner membrane. It carries out the reaction Na(+)(in) + 2 H(+)(out) = Na(+)(out) + 2 H(+)(in). Functionally, na(+)/H(+) antiporter that extrudes sodium in exchange for external protons. The sequence is that of Na(+)/H(+) antiporter NhaA 1 from Pseudomonas syringae pv. syringae (strain B728a).